A 475-amino-acid polypeptide reads, in one-letter code: Ankyrin repeat, SAM and basic leucine zipper domain-containing protein 1 (475 aa).

Residues 1–23 form a disordered region; sequence MAAARFRGLAVAGGGESSESEDD. Residues Ser-17, Ser-18, and Ser-20 each carry the phosphoserine modification. ANK repeat units lie at residues 45–74, 78–107, 110–144, 148–177, 181–210, and 214–243; these read EKNE…SVDS, YGWT…KASF, DKQT…DPNV, RLMT…EVNT, NGYT…NKML, and DGKT…PLEG. In terms of domain architecture, SAM spans 272 to 334; the sequence is SYTAFGDLEI…KILAALKELE (63 aa).

As to quaternary structure, interacts with DDX4, PIWIL1, RANBP9 and TDRD1.

Its subcellular location is the cytoplasm. Functionally, plays a central role during spermatogenesis by repressing transposable elements and preventing their mobilization, which is essential for the germline integrity. Acts via the piRNA metabolic process, which mediates the repression of transposable elements during meiosis by forming complexes composed of piRNAs and Piwi proteins and governs the methylation and subsequent repression of transposons. Its association with pi-bodies suggests a participation in the primary piRNAs metabolic process. Required prior to the pachytene stage to facilitate the production of multiple types of piRNAs, including those associated with repeats involved in the regulation of retrotransposons. May act by mediating protein-protein interactions during germ cell maturation. In Equus caballus (Horse), this protein is Ankyrin repeat, SAM and basic leucine zipper domain-containing protein 1 (ASZ1).